We begin with the raw amino-acid sequence, 535 residues long: Bifunctional purine biosynthesis protein PurH (535 aa).

Residues 1-148 (MNNARPIRRA…KNHKDTTIIV (148 aa)) enclose the MGS-like domain.

It belongs to the PurH family.

The catalysed reaction is (6R)-10-formyltetrahydrofolate + 5-amino-1-(5-phospho-beta-D-ribosyl)imidazole-4-carboxamide = 5-formamido-1-(5-phospho-D-ribosyl)imidazole-4-carboxamide + (6S)-5,6,7,8-tetrahydrofolate. It carries out the reaction IMP + H2O = 5-formamido-1-(5-phospho-D-ribosyl)imidazole-4-carboxamide. Its pathway is purine metabolism; IMP biosynthesis via de novo pathway; 5-formamido-1-(5-phospho-D-ribosyl)imidazole-4-carboxamide from 5-amino-1-(5-phospho-D-ribosyl)imidazole-4-carboxamide (10-formyl THF route): step 1/1. It functions in the pathway purine metabolism; IMP biosynthesis via de novo pathway; IMP from 5-formamido-1-(5-phospho-D-ribosyl)imidazole-4-carboxamide: step 1/1. The protein is Bifunctional purine biosynthesis protein PurH of Shewanella woodyi (strain ATCC 51908 / MS32).